We begin with the raw amino-acid sequence, 231 residues long: Elongation factor 1-delta (231 aa).

Residues 75 to 136 are disordered; it reads SGVTVEGNAP…AAAAAAKPAK (62 aa). Residues 101–117 show a composition bias toward acidic residues; it reads ADDDDDDDVDLFGEETE. A compositionally biased stretch (basic and acidic residues) spans 118–127; sequence EEKKAAEERA.

This sequence belongs to the EF-1-beta/EF-1-delta family. EF-1 is composed of 4 subunits: alpha, beta (1B-alpha=beta'), delta (1B-beta), and gamma (1B-gamma).

In terms of biological role, EF-1-beta and EF-1-beta' stimulate the exchange of GDP bound to EF-1-alpha to GTP. The protein is Elongation factor 1-delta of Beta vulgaris (Sugar beet).